Reading from the N-terminus, the 955-residue chain is Iron-responsive element-binding protein 2 (955 aa).

[4Fe-4S] cluster is bound by residues C504, C570, and C573.

The protein belongs to the aconitase/IPM isomerase family. Requires [4Fe-4S] cluster as cofactor. Post-translationally, ubiquitinated and degraded by the proteasome in presence of high level of iron and oxygen.

The protein localises to the cytoplasm. RNA-binding protein that binds to iron-responsive elements (IRES), which are stem-loop structures found in the 5'-UTR of ferritin, and delta aminolevulinic acid synthase mRNAs, and in the 3'-UTR of transferrin receptor mRNA. Binding to the IRE element in ferritin results in the repression of its mRNA translation. Binding of the protein to the transferrin receptor mRNA inhibits the degradation of this otherwise rapidly degraded mRNA. The chain is Iron-responsive element-binding protein 2 (ireb2) from Xenopus laevis (African clawed frog).